Here is a 338-residue protein sequence, read N- to C-terminus: MIVRDILEQIVAGQDLSRKETETVFAAIMAGAWTPAQIGALLMGLRMKGQRVEELVGATQALRACMTRVEVSTDHLLDTCGTGGDALSTFNISTVSAVVAAAGGARVAKHGNRSMVSRSGSADVLEAAGLRMDMSPAEVADSIERIGIGFLFAPAHHGAMRYAVGPRKELAIRSLFNLMGPLSNPAGAPHQVLGVYAERWLIPMAEAARELGSRHVLVVHGHDGLDEISLSGPSDIAELKDGMISRSRIQPEDFGLSSAPLATLQIDSVAAALAAAEEVLQNRPGPRRDVVLLNAGAALYAADVVPDMAVGVVVARAVLKSGAAWDKWQALLGRTSQG.

Residues Gly-81, Gly-84–Asp-85, Thr-89, Asn-91–Thr-94, Lys-109–Ser-117, and Ser-121 contribute to the 5-phospho-alpha-D-ribose 1-diphosphate site. Residue Gly-81 participates in anthranilate binding. Ser-93 serves as a coordination point for Mg(2+). Asn-112 contacts anthranilate. Arg-167 lines the anthranilate pocket. Positions 226 and 227 each coordinate Mg(2+).

Belongs to the anthranilate phosphoribosyltransferase family. As to quaternary structure, homodimer. Mg(2+) is required as a cofactor.

It carries out the reaction N-(5-phospho-beta-D-ribosyl)anthranilate + diphosphate = 5-phospho-alpha-D-ribose 1-diphosphate + anthranilate. The protein operates within amino-acid biosynthesis; L-tryptophan biosynthesis; L-tryptophan from chorismate: step 2/5. Functionally, catalyzes the transfer of the phosphoribosyl group of 5-phosphorylribose-1-pyrophosphate (PRPP) to anthranilate to yield N-(5'-phosphoribosyl)-anthranilate (PRA). This chain is Anthranilate phosphoribosyltransferase, found in Acidithiobacillus ferrooxidans (strain ATCC 23270 / DSM 14882 / CIP 104768 / NCIMB 8455) (Ferrobacillus ferrooxidans (strain ATCC 23270)).